The primary structure comprises 113 residues: MLQLTPSAAQEIKRLQHSRQLTRHHFRLAVRPGGCAGWLYHLDFVPEITADDLEYESGGVTVLVDSQSAGYLHNLKLDYAEDLMGGGFRFTNPNAAQVCSCSLSFAPNLEKNL.

Belongs to the HesB/IscA family.

This is an uncharacterized protein from Synechocystis sp. (strain ATCC 27184 / PCC 6803 / Kazusa).